A 175-amino-acid chain; its full sequence is ATP-dependent protease subunit HslV (175 aa).

Thr-2 is a catalytic residue. Positions 157, 160, and 163 each coordinate Na(+).

The protein belongs to the peptidase T1B family. HslV subfamily. A double ring-shaped homohexamer of HslV is capped on each side by a ring-shaped HslU homohexamer. The assembly of the HslU/HslV complex is dependent on binding of ATP.

It is found in the cytoplasm. It carries out the reaction ATP-dependent cleavage of peptide bonds with broad specificity.. Allosterically activated by HslU binding. Functionally, protease subunit of a proteasome-like degradation complex believed to be a general protein degrading machinery. This chain is ATP-dependent protease subunit HslV, found in Photobacterium profundum (strain SS9).